The primary structure comprises 588 residues: Phosphatidylinositol-3,5-bisphosphate 3-phosphatase mtm-1 (588 aa).

Residues 20-91 enclose the GRAM domain; sequence IQESIDLKLL…GQVSRIEKVG (72 aa). The Myotubularin phosphatase domain occupies 164–543; sequence GWKIYSAEKE…CGLHVWIDYY (380 aa). A 1,2-diacyl-sn-glycero-3-phospho-(1D-myo-inositol-3,5-bisphosphate)-binding residues include N293, N316, and I317. 3 residues coordinate a 1,2-diacyl-sn-glycero-3-phospho-(1D-myo-inositol-3-phosphate): N293, N316, and I317. The active-site Phosphocysteine intermediate is C378. S379, D380, G381, W382, D383, R384, K420, and R424 together coordinate a 1,2-diacyl-sn-glycero-3-phospho-(1D-myo-inositol-3,5-bisphosphate). The a 1,2-diacyl-sn-glycero-3-phospho-(1D-myo-inositol-3-phosphate) site is built by S379, D380, G381, W382, D383, and R384. S379 contributes to the phosphate binding site. Residues G381, W382, D383, and R384 each contribute to the phosphate site. R424 is an a 1,2-diacyl-sn-glycero-3-phospho-(1D-myo-inositol-3-phosphate) binding site. Residues 563 to 588 adopt a coiled-coil conformation; the sequence is AQFVDEKKQLLDEIMALDDAAQKLTA.

This sequence belongs to the protein-tyrosine phosphatase family. Non-receptor class myotubularin subfamily. As to expression, expressed in embryo, larva and in adults. Expressed in a few head and tail neurons. Expressed in hypodermis, body wall and pharyngeal muscles, sheath cells, vulva, distal tip cells and coelomocytes.

The protein localises to the cell membrane. Its subcellular location is the cell projection. The protein resides in the phagocytic cup. It localises to the apical cell membrane. It is found in the cytoplasmic granule membrane. It carries out the reaction a 1,2-diacyl-sn-glycero-3-phospho-(1D-myo-inositol-3,5-bisphosphate) + H2O = a 1,2-diacyl-sn-glycero-3-phospho-(1D-myo-inositol-5-phosphate) + phosphate. The catalysed reaction is a 1,2-diacyl-sn-glycero-3-phospho-(1D-myo-inositol-3-phosphate) + H2O = a 1,2-diacyl-sn-glycero-3-phospho-(1D-myo-inositol) + phosphate. It catalyses the reaction 1,2-dioctanoyl-sn-glycero-3-phospho-(1-D-myo-inositol-3-phosphate) + H2O = 1,2-dioctanoyl-sn-glycero-3-phospho-(1D-myo-inositol) + phosphate. In terms of biological role, lipid phosphatase that specifically dephosphorylates phosphatidylinositol 3-phosphate (PI3P) and phosphatidylinositol 3,5-bisphosphate (PI(3,5)P2). Negatively regulates accumulation of PI3P on intracellular vesicles. Negatively regulates phagocytosis of apoptotic cells probably by limiting the recruitment and/or the activation of ced-5, ced-2 and ced-12 complex. In addition, may positively regulate phagosome maturation by promoting recycling of apoptotic receptor ced-1 back to the plasma membrane. Essential for embryonic and larval development. May promote migration of distal tip cells. This Caenorhabditis elegans protein is Phosphatidylinositol-3,5-bisphosphate 3-phosphatase mtm-1.